The sequence spans 173 residues: Shikimate kinase (173 aa).

14–19 (GAGKST) contacts ATP. S18 contacts Mg(2+). Positions 36, 60, and 82 each coordinate substrate. ATP is bound at residue R120. R140 lines the substrate pocket. Q157 contacts ATP.

Belongs to the shikimate kinase family. Monomer. Mg(2+) is required as a cofactor.

It is found in the cytoplasm. The enzyme catalyses shikimate + ATP = 3-phosphoshikimate + ADP + H(+). Its pathway is metabolic intermediate biosynthesis; chorismate biosynthesis; chorismate from D-erythrose 4-phosphate and phosphoenolpyruvate: step 5/7. Catalyzes the specific phosphorylation of the 3-hydroxyl group of shikimic acid using ATP as a cosubstrate. In Buchnera aphidicola subsp. Schizaphis graminum (strain Sg), this protein is Shikimate kinase.